Here is a 392-residue protein sequence, read N- to C-terminus: ADP-ribosylhydrolase ARH1 (392 aa).

3 residues coordinate Mg(2+): Ser79, Asp80, and Asp81. A substrate-binding site is contributed by Lys109. The segment at 125 to 127 is substrate; the sequence is IQT. Gly159 serves as a coordination point for substrate. Substrate stretches follow at residues 192-194, 309-311, and 315-316; these read HNN, FSG, and SS. Mg(2+) is bound by residues Asp348, Asp350, and Ser351.

Belongs to the ADP-ribosylglycohydrolase family. Monomer. Mg(2+) is required as a cofactor.

The enzyme catalyses N(omega)-(ADP-D-ribosyl)-L-arginyl-[protein] + H2O = ADP-D-ribose + L-arginyl-[protein]. Functionally, specifically acts as an arginine mono-ADP-ribosylhydrolase by mediating the removal of mono-ADP-ribose attached to arginine residues on proteins. This Dictyostelium discoideum (Social amoeba) protein is ADP-ribosylhydrolase ARH1 (adprh).